A 609-amino-acid chain; its full sequence is Glutamine--fructose-6-phosphate aminotransferase [isomerizing] (609 aa).

Catalysis depends on C2, which acts as the Nucleophile; for GATase activity. The Glutamine amidotransferase type-2 domain maps to 2–218 (CGIVGAVAQR…EGDVVEVTRR (217 aa)). 2 SIS domains span residues 286–426 (ADAL…LKGA) and 458–599 (LAEG…VDQP). K604 acts as the For Fru-6P isomerization activity in catalysis.

As to quaternary structure, homodimer.

The protein resides in the cytoplasm. It carries out the reaction D-fructose 6-phosphate + L-glutamine = D-glucosamine 6-phosphate + L-glutamate. Functionally, catalyzes the first step in hexosamine metabolism, converting fructose-6P into glucosamine-6P using glutamine as a nitrogen source. The sequence is that of Glutamine--fructose-6-phosphate aminotransferase [isomerizing] from Yersinia pestis.